Reading from the N-terminus, the 401-residue chain is MKEKIVLAYSGGLDTSVAVQWLIDKGYDVVACCLDVGEGKDLDIVYKKALDMGAVECHIIDATKEFSDEYVSYAIKGNLMYENAYPLVSALSRPLIAKKLVEIAEKTNSVGIAHGCTGKGNDQVRFEVAIKALNPSLKAFAPVREWAWSREEEIDYAIKHNIPVSINHDSPYSIDQNLWGRANECGILEDPYAAPPEDAFDLTNALEETPDAADEIILTFDKGIPVQIDGKTYELDDLILTLNALAGKHGIGRIDHVENRLVGIKSREIYEAPAAEVILKAHKALETITLTKDVAHFKPIIEKQFAEQLYNGLWFSPLTDSLKLFIDSTQQYVSGDVRIKLFKGNAIVNGRKSPYTLYDEKLATYTKEDAFNQDAAVGFIDIYGLPTQVNSMLHGGYSNEQ.

8-16 (AYSGGLDTS) serves as a coordination point for ATP. Tyr-85 is a binding site for L-citrulline. Gly-115 is an ATP binding site. 3 residues coordinate L-aspartate: Thr-117, Asn-121, and Asp-122. Residue Asn-121 coordinates L-citrulline. Residues Arg-125, Ser-173, Glu-258, and Tyr-270 each coordinate L-citrulline.

This sequence belongs to the argininosuccinate synthase family. Type 1 subfamily. In terms of assembly, homotetramer.

The protein resides in the cytoplasm. It catalyses the reaction L-citrulline + L-aspartate + ATP = 2-(N(omega)-L-arginino)succinate + AMP + diphosphate + H(+). It functions in the pathway amino-acid biosynthesis; L-arginine biosynthesis; L-arginine from L-ornithine and carbamoyl phosphate: step 2/3. The chain is Argininosuccinate synthase from Staphylococcus aureus (strain MSSA476).